A 595-amino-acid polypeptide reads, in one-letter code: MDTLHHRFQQFQKTIWFNIFCYLWTGIFSFLAFAPVSLTHFVWIAPFGFFWLSLKYHGKYKKLFFHGLLIGVVFYAISFHWIIHMAITFGNFPYVVAILILLFAGLLFGLKFPIFMMSFSFLSGKIGRHSVWVAGFCGLLSELIGPQLFPWYWGNLAAGNIILAQNAEITGVYGISFLVFIVSYTLFQSNPWHWKEIIHSKEKRKQYLRFITLPALLLLTFIVSGIFLFKKWENVKPVKSLNVLIVQPDAPLSFRDGREIKESIEALMARIEKLTDEGAVRLGKKPDLIVLPEAGVPFFSAHKTEITTKVRRMYWDRFDSLMFLLANRYKANVFFNEIDAGFKGAPSPRNLRYYNNNVLYDPNGDRRDSYQKKFLLMFGEYMPFDFLYELSQQTGRFEPGLTHNLIRYYTPRYYTLAEKEKSPKGRHLGWTDTETFNHEAVRSYYETTRTEVSETGKFLPLICYEVILPEFVREFRTAGNPEFIVNLTNDKWYGATTESDQHMELGRLRSIELRRWMVRSTNSGISANIDHLGRFVGNKKTGLMTAEALSETIDVIDSPPTFYTQYGNLIPWLMLFLTGIYYLNLLIGIRRGKSS.

The next 5 membrane-spanning stretches (helical) occupy residues 30-50, 63-83, 95-115, 167-187, and 210-230; these read FLAF…FGFF, LFFH…HWII, VVAI…FPIF, AEIT…YTLF, and FITL…FLFK. Residues 241–555 form the CN hydrolase domain; that stretch reads LNVLIVQPDA…AEALSETIDV (315 aa). Glu293 (proton acceptor) is an active-site residue. Lys372 is an active-site residue. The Nucleophile role is filled by Cys463. A helical membrane pass occupies residues 569–589; the sequence is LIPWLMLFLTGIYYLNLLIGI.

This sequence belongs to the CN hydrolase family. Apolipoprotein N-acyltransferase subfamily.

It is found in the cell inner membrane. The catalysed reaction is N-terminal S-1,2-diacyl-sn-glyceryl-L-cysteinyl-[lipoprotein] + a glycerophospholipid = N-acyl-S-1,2-diacyl-sn-glyceryl-L-cysteinyl-[lipoprotein] + a 2-acyl-sn-glycero-3-phospholipid + H(+). It participates in protein modification; lipoprotein biosynthesis (N-acyl transfer). Functionally, catalyzes the phospholipid dependent N-acylation of the N-terminal cysteine of apolipoprotein, the last step in lipoprotein maturation. This is Apolipoprotein N-acyltransferase 2 from Leptospira interrogans serogroup Icterohaemorrhagiae serovar copenhageni (strain Fiocruz L1-130).